A 250-amino-acid polypeptide reads, in one-letter code: MLDQIIQQKKEEIKSIVLPETCQIERRSFKKALQNPNRFIGLIAEVKKASPSKGLIKEHFVPETIAADYEAAKADALSVLTDTRFFQGRNQFLTDVKQTVSLPVLRKDFIIDSLQVEESFRIGADAILLIGEALEPSELHELYLEAREKGMDVLVEVHDETVLERILQVFQPDILGINNRDLKTFRTSVSQTEKIAQLVPDGCLLVSESGIGSLADLQFVNKHGAQAVLVGESLMREDSQQKAIRGLFGE.

The protein belongs to the TrpC family.

The catalysed reaction is 1-(2-carboxyphenylamino)-1-deoxy-D-ribulose 5-phosphate + H(+) = (1S,2R)-1-C-(indol-3-yl)glycerol 3-phosphate + CO2 + H2O. It functions in the pathway amino-acid biosynthesis; L-tryptophan biosynthesis; L-tryptophan from chorismate: step 4/5. The chain is Indole-3-glycerol phosphate synthase from Bacillus velezensis (strain DSM 23117 / BGSC 10A6 / LMG 26770 / FZB42) (Bacillus amyloliquefaciens subsp. plantarum).